A 443-amino-acid polypeptide reads, in one-letter code: MVRKVNIIKGNEGQGKRIKFVQLIFVDINGMPKGMEVPITRLEEAIEEGIAFDGSSVPGFQGIEDSDLVFKADPSTYVEVPWDNVARVYGYIYKDGKPYEADPRGVLRRTLERLEKLGIKVYIGPEPEFYLFKKNGSWELEIPDVGGYFDILTLDKAKDIKREIAEYMPYFGLTPEVLHHEVGKAQHEIDFRHDEALKTADNIVSFKYIVKAVAEMHGLYATFMPKPIYGMPGNGMHLHISLWKDGENIFKGEEGLSETALYFIGGLLKHAKALAAVTNPTVNSYKRLVPGYEAPVYISWGYKNRSALIRVPAFWGNGARIEYRCPDPSANSYLAFAAILMAGLDGIKHKIEPFAYVEENVYEMDEKRREEIGIDMLPENLGEALDELERDKVVKEALGGAYRNFVGYKRKEWEEYLDYLEAKNLPKDTKNVTEWELERYFFI.

The region spanning K16 to K97 is the GS beta-grasp domain. The GS catalytic domain occupies P103–I443. Mg(2+)-binding residues include E126 and E128. E176 is a binding site for ATP. Positions 181 and 188 each coordinate Mg(2+). Position 233 (G233) interacts with L-glutamate. Position 237 (H237) interacts with Mg(2+). Residues H239–S241 and S241 contribute to the ATP site. R287, E293, and R305 together coordinate L-glutamate. R305 and R310 together coordinate ATP. A Mg(2+)-binding site is contributed by E322. R324 lines the L-glutamate pocket.

It belongs to the glutamine synthetase family. As to quaternary structure, oligomer of 12 subunits arranged in the form of two hexagons. It depends on Mg(2+) as a cofactor.

It is found in the cytoplasm. The catalysed reaction is L-glutamate + NH4(+) + ATP = L-glutamine + ADP + phosphate + H(+). In terms of biological role, probably involved in nitrogen metabolism via ammonium assimilation. Catalyzes the ATP-dependent biosynthesis of glutamine from glutamate and ammonia. This Pyrococcus horikoshii (strain ATCC 700860 / DSM 12428 / JCM 9974 / NBRC 100139 / OT-3) protein is Glutamine synthetase.